We begin with the raw amino-acid sequence, 33 residues long: U23-ctenitoxin-Pn1a (33 aa).

3 disulfides stabilise this stretch: C3-C16, C10-C21, and C15-C30.

Expressed by the venom gland.

The protein resides in the secreted. Its function is as follows. Non-toxic to mice. The polypeptide is U23-ctenitoxin-Pn1a (Phoneutria nigriventer (Brazilian armed spider)).